We begin with the raw amino-acid sequence, 368 residues long: Terpene cyclase penA (368 aa).

6 consecutive transmembrane segments (helical) span residues 10 to 30 (IILA…NGFI), 81 to 101 (LSLY…ILLM), 118 to 138 (LTGL…LLAM), 192 to 212 (LFIA…GIAH), 233 to 253 (FALA…FLSI), and 334 to 354 (LATM…YWTA).

This sequence belongs to the membrane-bound ascI terpene cyclase family.

It is found in the membrane. Its pathway is secondary metabolite biosynthesis. Functionally, part of the gene cluster that mediates the biosynthesis of the indole diterpenes penitrems. The geranylgeranyl diphosphate (GGPP) synthase penG catalyzes the first step in penitrem biosynthesis via conversion of farnesyl pyrophosphate and isopentyl pyrophosphate into geranylgeranyl pyrophosphate (GGPP). Condensation of indole-3-glycerol phosphate with GGPP by the prenyl transferase penC then forms 3-geranylgeranylindole (3-GGI). Epoxidation by the FAD-dependent monooxygenase penM leads to a epoxidized-GGI that is substrate of the terpene cyclase penB for cyclization to yield paspaline. Paspaline is subsequently converted to 13-desoxypaxilline by the cytochrome P450 monooxygenase penP, the latter being then converted to paxilline by the cytochrome P450 monooxygenase penQ. Paxilline is converted to beta-paxitriol via C-10 ketoreduction by the short-chain dehydrogenase PC-15 which can be monoprenylated at the C-20 by the indole diterpene prenyltransferase penD. A two-step elimination (acetylation and elimination) process performed by the O-acetyltransferase PC-16 and the P.simplicissimum ptmI-ortholog not yet identified in P.crustosum, leads to the production of the prenylated form of penijanthine. The FAD-linked oxidoreductase ptmO then converts the prenylated form of penijanthine into PC-M5 which is in turn transformed into PC-M4 by the aromatic dimethylallyltransferase PC-22. A series of oxidation steps involving 4 cytochrome P450 monooxygenases (PC-21, PC-05, PC-23, PC-20) and a FAD-dependent monooxygenase (PC-14) are required for the transformation of PC-M4 to penitrems A and E. Synthesis of these final products is proposed to proceed via penitrems D and C (PC-21, PC-05, PC-14) and penitrems B and F (PC-21, PC-05, PC-14, PC-23). In Penicillium crustosum (Blue mold fungus), this protein is Terpene cyclase penA.